Here is a 263-residue protein sequence, read N- to C-terminus: Type III pantothenate kinase (263 aa).

9-16 (DIGNTSIK) lines the ATP pocket. Residues tyrosine 103 and 110–113 (GADR) contribute to the substrate site. Aspartate 112 (proton acceptor) is an active-site residue. Aspartate 134 contacts K(+). Threonine 137 provides a ligand contact to ATP. Threonine 190 contacts substrate.

It belongs to the type III pantothenate kinase family. In terms of assembly, homodimer. It depends on NH4(+) as a cofactor. K(+) is required as a cofactor.

Its subcellular location is the cytoplasm. The catalysed reaction is (R)-pantothenate + ATP = (R)-4'-phosphopantothenate + ADP + H(+). The protein operates within cofactor biosynthesis; coenzyme A biosynthesis; CoA from (R)-pantothenate: step 1/5. Its function is as follows. Catalyzes the phosphorylation of pantothenate (Pan), the first step in CoA biosynthesis. This Desulfovibrio desulfuricans (strain ATCC 27774 / DSM 6949 / MB) protein is Type III pantothenate kinase.